The chain runs to 190 residues: Elongation factor P-like protein (190 aa).

This sequence belongs to the elongation factor P family.

This is Elongation factor P-like protein from Photorhabdus laumondii subsp. laumondii (strain DSM 15139 / CIP 105565 / TT01) (Photorhabdus luminescens subsp. laumondii).